Consider the following 511-residue polypeptide: MEKFEGYSEKHKSRQQYFVYPLLFQEYIYAFAHDYGLKGSEPVEIVSCNNKKFSSLLVKRLIIRMYQQNFWINSVNHSNQDRLLDYKNYFYSEFYSQILSEGFAIVAEIPFSLRELSCPKEKEIPKFQNLRSIHSIFPFLEDKFLHLDYLSHIEIPYPIHLEILVQLLQYRIQDVPSLHLLRFFLNYYSNWNSLIASMKSIFLLKKENKRLFRFLYNSYVSEYEFFLLFLRKQSSFLPLASSGTFLERIHFSRKMEHFGVMYPGFFRKTLWFFMDSLMHYVRYQGKAILASKGTFFLKKKWKCYFVYFWQYSFSFWTQPRRIHLNQLANSCFDFLGYLSSVPKSTLLVRNQMLENSFLIDTRMKKFDTIVPAIPLIASLSKAQFCTRLGHPISKPIWTDLLDWDILDRFGRICRNLFHYHSGSSKKQTLYRLKYILRLSCARTLARKHKSTVRTFMLRLGSVFLEEFFTEEEQVFSLMFTKTTFFSFRGSHSERIWYLDIICINDLVNPLN.

The protein belongs to the intron maturase 2 family. MatK subfamily.

It localises to the plastid. The protein localises to the chloroplast. Its function is as follows. Usually encoded in the trnK tRNA gene intron. Probably assists in splicing its own and other chloroplast group II introns. The protein is Maturase K of Melica altissima (Siberian melic grass).